A 355-amino-acid polypeptide reads, in one-letter code: Putative cyclin-A3-1 (355 aa).

Belongs to the cyclin family. Cyclin AB subfamily.

The protein is Putative cyclin-A3-1 (CYCA3-1) of Arabidopsis thaliana (Mouse-ear cress).